We begin with the raw amino-acid sequence, 520 residues long: Hydroxymethylglutaryl-CoA synthase, cytoplasmic (520 aa).

Residue Ser4 is modified to Phosphoserine. (3S)-3-hydroxy-3-methylglutaryl-CoA is bound by residues Asp43 and Ala44. CoA is bound at residue 44–46 (AGK). Lys46 is modified (N6-acetyllysine). Glu95 (proton donor/acceptor) is an active-site residue. (3S)-3-hydroxy-3-methylglutaryl-CoA-binding residues include Cys129, Asn167, Thr171, Ser221, and His264. The Acyl-thioester intermediate role is filled by Cys129. Asn167 lines the CoA pocket. Position 221 (Ser221) interacts with CoA. The active-site Proton donor/acceptor is His264. CoA contacts are provided by Lys269 and Lys273. Lys273, Asn343, and Ser377 together coordinate (3S)-3-hydroxy-3-methylglutaryl-CoA. The residue at position 273 (Lys273) is an N6-acetyllysine. The tract at residues 487–520 (NTATEHIPSPAKKVPRLPATSGEPESAVISNGEH) is disordered. A phosphoserine mark is found at Ser495 and Ser516.

This sequence belongs to the thiolase-like superfamily. HMG-CoA synthase family. Homodimer.

Its subcellular location is the cytoplasm. The enzyme catalyses acetoacetyl-CoA + acetyl-CoA + H2O = (3S)-3-hydroxy-3-methylglutaryl-CoA + CoA + H(+). Its pathway is metabolic intermediate biosynthesis; (R)-mevalonate biosynthesis; (R)-mevalonate from acetyl-CoA: step 2/3. Functionally, catalyzes the condensation of acetyl-CoA with acetoacetyl-CoA to form HMG-CoA, which is converted by HMG-CoA reductase (HMGCR) into mevalonate, a precursor for cholesterol synthesis. This chain is Hydroxymethylglutaryl-CoA synthase, cytoplasmic, found in Rattus norvegicus (Rat).